Reading from the N-terminus, the 473-residue chain is Ribosomal RNA small subunit methyltransferase F (473 aa).

S-adenosyl-L-methionine-binding positions include 123–129 (AAAPGSK), glutamate 147, aspartate 174, and aspartate 192. The Nucleophile role is filled by cysteine 245.

Belongs to the class I-like SAM-binding methyltransferase superfamily. RsmB/NOP family.

Its subcellular location is the cytoplasm. The catalysed reaction is cytidine(1407) in 16S rRNA + S-adenosyl-L-methionine = 5-methylcytidine(1407) in 16S rRNA + S-adenosyl-L-homocysteine + H(+). Functionally, specifically methylates the cytosine at position 1407 (m5C1407) of 16S rRNA. The chain is Ribosomal RNA small subunit methyltransferase F from Vibrio atlanticus (strain LGP32) (Vibrio splendidus (strain Mel32)).